The following is a 508-amino-acid chain: Ribose import ATP-binding protein RbsA 2 (508 aa).

ABC transporter domains lie at 6 to 241 (LTIH…VGRE) and 254 to 499 (ERSG…SGMG). 38-45 (GENGAGKS) serves as a coordination point for ATP.

Belongs to the ABC transporter superfamily. Ribose importer (TC 3.A.1.2.1) family. As to quaternary structure, the complex is composed of an ATP-binding protein (RbsA), two transmembrane proteins (RbsC) and a solute-binding protein (RbsB).

The protein resides in the cell inner membrane. It carries out the reaction D-ribose(out) + ATP + H2O = D-ribose(in) + ADP + phosphate + H(+). Its function is as follows. Part of the ABC transporter complex RbsABC involved in ribose import. Responsible for energy coupling to the transport system. The polypeptide is Ribose import ATP-binding protein RbsA 2 (Rhizobium etli (strain ATCC 51251 / DSM 11541 / JCM 21823 / NBRC 15573 / CFN 42)).